We begin with the raw amino-acid sequence, 85 residues long: UPF0386 protein RHECIAT_CH0001945 (85 aa).

The protein belongs to the UPF0386 family.

The sequence is that of UPF0386 protein RHECIAT_CH0001945 from Rhizobium etli (strain CIAT 652).